The following is a 426-amino-acid chain: Serine--tRNA ligase (426 aa).

233 to 235 (TAE) is a binding site for L-serine. 264 to 266 (RSE) lines the ATP pocket. Residue Glu-287 coordinates L-serine. 351–354 (EISS) is a binding site for ATP. Ser-387 lines the L-serine pocket.

Belongs to the class-II aminoacyl-tRNA synthetase family. Type-1 seryl-tRNA synthetase subfamily. As to quaternary structure, homodimer. The tRNA molecule binds across the dimer.

Its subcellular location is the cytoplasm. The catalysed reaction is tRNA(Ser) + L-serine + ATP = L-seryl-tRNA(Ser) + AMP + diphosphate + H(+). It catalyses the reaction tRNA(Sec) + L-serine + ATP = L-seryl-tRNA(Sec) + AMP + diphosphate + H(+). It participates in aminoacyl-tRNA biosynthesis; selenocysteinyl-tRNA(Sec) biosynthesis; L-seryl-tRNA(Sec) from L-serine and tRNA(Sec): step 1/1. Functionally, catalyzes the attachment of serine to tRNA(Ser). Is also able to aminoacylate tRNA(Sec) with serine, to form the misacylated tRNA L-seryl-tRNA(Sec), which will be further converted into selenocysteinyl-tRNA(Sec). The sequence is that of Serine--tRNA ligase from Stutzerimonas stutzeri (strain A1501) (Pseudomonas stutzeri).